We begin with the raw amino-acid sequence, 180 residues long: Large ribosomal subunit protein uL6c (180 aa).

It belongs to the universal ribosomal protein uL6 family. As to quaternary structure, part of the 50S ribosomal subunit.

Its subcellular location is the plastid. The protein localises to the chloroplast. Functionally, binds 23S rRNA. The sequence is that of Large ribosomal subunit protein uL6c (rpl6) from Porphyra purpurea (Red seaweed).